Consider the following 251-residue polypeptide: uncharacterized protein (251 aa).

10-34 (ITGAGSGIGKKAAVMFAERGAKVAI) is an NADP(+) binding site. Serine 139 provides a ligand contact to substrate. Tyrosine 152 serves as the catalytic Proton acceptor.

This sequence belongs to the short-chain dehydrogenases/reductases (SDR) family.

This is an uncharacterized protein from Thermotoga maritima (strain ATCC 43589 / DSM 3109 / JCM 10099 / NBRC 100826 / MSB8).